The chain runs to 388 residues: Diphosphomevalonate decarboxylase (388 aa).

Residues 19–22 (YWGK), Arg74, 153–158 (SGSACR), and Thr209 contribute to the (R)-5-diphosphomevalonate site. The interval 367 to 388 (QGPQGSSESLINDKGLPKAVAN) is disordered.

The protein belongs to the diphosphomevalonate decarboxylase family. Homodimer.

It catalyses the reaction (R)-5-diphosphomevalonate + ATP = isopentenyl diphosphate + ADP + phosphate + CO2. It participates in isoprenoid biosynthesis; isopentenyl diphosphate biosynthesis via mevalonate pathway; isopentenyl diphosphate from (R)-mevalonate: step 3/3. Diphosphomevalonate decarboxylase; part of the second module of ergosterol biosynthesis pathway that includes the middle steps of the pathway. The second module is carried out in the vacuole and involves the formation of farnesyl diphosphate, which is also an important intermediate in the biosynthesis of ubiquinone, dolichol, heme and prenylated proteins. Activity by the mevalonate kinase ERG12 first converts mevalonate into 5-phosphomevalonate. 5-phosphomevalonate is then further converted to 5-diphosphomevalonate by the phosphomevalonate kinase ERG8. The diphosphomevalonate decarboxylase MVD1/ERG19 then produces isopentenyl diphosphate. The isopentenyl-diphosphate delta-isomerase IDI1 then catalyzes the 1,3-allylic rearrangement of the homoallylic substrate isopentenyl (IPP) to its highly electrophilic allylic isomer, dimethylallyl diphosphate (DMAPP). Finally the farnesyl diphosphate synthase ERG20 catalyzes the sequential condensation of isopentenyl pyrophosphate with dimethylallyl pyrophosphate, and then with the resultant geranylpyrophosphate to the ultimate product farnesyl pyrophosphate. This is Diphosphomevalonate decarboxylase from Debaryomyces hansenii (strain ATCC 36239 / CBS 767 / BCRC 21394 / JCM 1990 / NBRC 0083 / IGC 2968) (Yeast).